A 444-amino-acid polypeptide reads, in one-letter code: Glutamate--methylamine ligase (444 aa).

In terms of domain architecture, GS beta-grasp spans 14–97 (HHVKYVLAQF…LVCDGHVNGK (84 aa)). Residues 103 to 444 (TRVVLKQQIA…WEINRYVQFY (342 aa)) enclose the GS catalytic domain.

The protein belongs to the glutamine synthetase family. Type 3 subfamily. Requires Mg(2+) as cofactor.

It catalyses the reaction methylamine + L-glutamate + ATP = N(5)-methyl-L-glutamine + ADP + phosphate + H(+). The catalysed reaction is ethylamine + L-glutamate + ATP = N(5)-ethyl-L-glutamine + ADP + phosphate + H(+). Formation of theanine is repressed by a high concentration of glutamic acid. Catalyzes the formation of N(5)-methyl-L-glutamine from glutamate and methylamine. In vitro, can also use ethylamine, hydroxylamine and ammonia, with 75%, 40% and 1% activity compared to methylamine, respectively. The polypeptide is Glutamate--methylamine ligase (Methylovorus mays).